Consider the following 83-residue polypeptide: Small ribosomal subunit protein bS16 (83 aa).

It belongs to the bacterial ribosomal protein bS16 family.

This is Small ribosomal subunit protein bS16 from Shewanella putrefaciens (strain CN-32 / ATCC BAA-453).